We begin with the raw amino-acid sequence, 280 residues long: Virginiamycin B lyase (280 aa).

His215 lines the substrate pocket. Residue Glu254 coordinates Mg(2+). Residue His256 is the Proton acceptor of the active site. Glu271 contributes to the Mg(2+) binding site.

This sequence belongs to the Vgb family. In terms of assembly, monomer. The cofactor is Mg(2+).

Functionally, inactivates the type B streptogramin antibiotics by linearizing the lactone ring at the ester linkage, generating a free phenylglycine carboxylate and converting the threonyl moiety into 2-amino-butenoic acid. This Mycobacterium sp. (strain KMS) protein is Virginiamycin B lyase.